A 153-amino-acid chain; its full sequence is NADPH-dependent 7-cyano-7-deazaguanine reductase (153 aa).

The disordered stretch occupies residues 1 to 22; sequence MTDNRYDNLGQLGTSTPLPDNP. C51 serves as the catalytic Thioimide intermediate. D58 functions as the Proton donor in the catalytic mechanism. Substrate-binding positions include 73 to 75 and 92 to 93; these read VES and HE.

This sequence belongs to the GTP cyclohydrolase I family. QueF type 1 subfamily.

It localises to the cytoplasm. The catalysed reaction is 7-aminomethyl-7-carbaguanine + 2 NADP(+) = 7-cyano-7-deazaguanine + 2 NADPH + 3 H(+). Its pathway is tRNA modification; tRNA-queuosine biosynthesis. Functionally, catalyzes the NADPH-dependent reduction of 7-cyano-7-deazaguanine (preQ0) to 7-aminomethyl-7-deazaguanine (preQ1). This is NADPH-dependent 7-cyano-7-deazaguanine reductase from Maricaulis maris (strain MCS10) (Caulobacter maris).